The chain runs to 326 residues: DNA-directed RNA polymerase subunit alpha (326 aa).

An alpha N-terminal domain (alpha-NTD) region spans residues 1-231; sequence MQTALLKPKI…DQLSVFAALE (231 aa). Residues 247 to 326 form an alpha C-terminal domain (alpha-CTD) region; it reads IDPILLRPVD…ENWPPAGLEK (80 aa).

It belongs to the RNA polymerase alpha chain family. Homodimer. The RNAP catalytic core consists of 2 alpha, 1 beta, 1 beta' and 1 omega subunit. When a sigma factor is associated with the core the holoenzyme is formed, which can initiate transcription.

The enzyme catalyses RNA(n) + a ribonucleoside 5'-triphosphate = RNA(n+1) + diphosphate. DNA-dependent RNA polymerase catalyzes the transcription of DNA into RNA using the four ribonucleoside triphosphates as substrates. This chain is DNA-directed RNA polymerase subunit alpha, found in Cupriavidus necator (strain ATCC 17699 / DSM 428 / KCTC 22496 / NCIMB 10442 / H16 / Stanier 337) (Ralstonia eutropha).